The primary structure comprises 290 residues: Agglutinin-2 (290 aa).

An N-terminal signal peptide occupies residues 1–35 (MAISNTNLLQTKKPISLPLLAFITLFLMLLNRVNS). Residue N155 is glycosylated (N-linked (GlcNAc...) asparagine). E165 and D167 together coordinate Mn(2+). Ca(2+) is bound by residues D167, N171, and D175. D175 and H180 together coordinate Mn(2+). A glycan (N-linked (GlcNAc...) asparagine) is linked at N200.

This sequence belongs to the leguminous lectin family. As to quaternary structure, homotetramer.

Mannose/glucose binding bark lectin. Its function is as follows. Bark lectins are storage proteins that probably maintain stocks of nitrogen during dormant period. Self-aggregatable molecules that can bind their own carbohydrate side chains. They could also play a role in the plant's defense against phytophagous invertebrates or herbivorous higher animals. The polypeptide is Agglutinin-2 (Cladrastis kentukea (Yellow wood)).